Here is a 569-residue protein sequence, read N- to C-terminus: Intraflagellar transport protein 74/72 (569 aa).

Coiled coils occupy residues Ile75–Glu156, Tyr201–Asn231, and Ala271–His298.

Belongs to the IFT74 family.

The protein localises to the cell projection. It is found in the cilium. It localises to the flagellum. The protein resides in the cytoplasm. Its subcellular location is the cytoskeleton. The protein localises to the flagellum axoneme. It is found in the flagellum basal body. Component of the intraflagellar transport complex B (IFT-B) involved in flagellar assembly. This is Intraflagellar transport protein 74/72 from Giardia intestinalis (strain ATCC 50803 / WB clone C6) (Giardia lamblia).